Consider the following 291-residue polypeptide: Ribosomal RNA small subunit methyltransferase A (291 aa).

S-adenosyl-L-methionine is bound by residues His-37, Leu-39, Gly-64, Glu-85, Asp-110, and Asn-131.

It belongs to the class I-like SAM-binding methyltransferase superfamily. rRNA adenine N(6)-methyltransferase family. RsmA subfamily.

The protein localises to the cytoplasm. The catalysed reaction is adenosine(1518)/adenosine(1519) in 16S rRNA + 4 S-adenosyl-L-methionine = N(6)-dimethyladenosine(1518)/N(6)-dimethyladenosine(1519) in 16S rRNA + 4 S-adenosyl-L-homocysteine + 4 H(+). Specifically dimethylates two adjacent adenosines (A1518 and A1519) in the loop of a conserved hairpin near the 3'-end of 16S rRNA in the 30S particle. May play a critical role in biogenesis of 30S subunits. This Dehalococcoides mccartyi (strain ATCC BAA-2266 / KCTC 15142 / 195) (Dehalococcoides ethenogenes (strain 195)) protein is Ribosomal RNA small subunit methyltransferase A.